The chain runs to 541 residues: Protein wntless homolog (541 aa).

Topologically, residues methionine 1 to cysteine 15 are cytoplasmic. The chain crosses the membrane as a helical span at residues isoleucine 16–alanine 36. The Lumenal segment spans residues proline 37 to lysine 232. The interval methionine 101–lysine 232 is interaction with Wnt proteins. Residues valine 233–tryptophan 253 traverse the membrane as a helical segment. The Cytoplasmic portion of the chain corresponds to arginine 254–lysine 268. A helical membrane pass occupies residues valine 269–isoleucine 289. Over glycine 290–arginine 303 the chain is Lumenal. Residues glutamine 304–methionine 324 form a helical membrane-spanning segment. Residues aspartate 325 to histidine 331 are Cytoplasmic-facing. Residues isoleucine 332–phenylalanine 352 traverse the membrane as a helical segment. The Lumenal portion of the chain corresponds to aspartate 353 to alanine 380. Residues phenylalanine 381 to phenylalanine 401 traverse the membrane as a helical segment. Topologically, residues glutamine 402–arginine 431 are cytoplasmic. Residues phenylalanine 432–valine 452 traverse the membrane as a helical segment. Over serine 453–serine 471 the chain is Lumenal. Residues alanine 472–tyrosine 492 traverse the membrane as a helical segment. At alanine 493–glutamate 541 the chain is on the cytoplasmic side.

This sequence belongs to the wntless family. As to quaternary structure, interacts with WNT3A. Interacts with WNT1, WNT3 and WNT5A. N-glycosylated.

It is found in the golgi apparatus membrane. Its subcellular location is the cytoplasmic vesicle membrane. The protein localises to the cell membrane. It localises to the endoplasmic reticulum membrane. The protein resides in the early endosome membrane. Regulates Wnt proteins sorting and secretion in a feedback regulatory mechanism. This reciprocal interaction plays a key role in the regulation of expression, subcellular location, binding and organelle-specific association of Wnt proteins. Plays also an important role in establishment of the anterior-posterior body axis formation during development. This chain is Protein wntless homolog (WLS), found in Homo sapiens (Human).